The following is a 522-amino-acid chain: TNF receptor-associated factor 6 (522 aa).

The interaction with TAX1BP1 stretch occupies residues 1 to 354 (MSLLNCENSC…EAQQCNGIYI (354 aa)). The RING-type zinc finger occupies 70 to 109 (CPICLMALREAVQTPCGHRFCKACIIKSIRDAGHKCPVDN). Residue Lys-124 forms a Glycyl lysine isopeptide (Lys-Gly) (interchain with G-Cter in SUMO); alternate linkage. Lys-124 is covalently cross-linked (Glycyl lysine isopeptide (Lys-Gly) (interchain with G-Cter in ubiquitin); alternate). A Glycyl lysine isopeptide (Lys-Gly) (interchain with G-Cter in SUMO) cross-link involves residue Lys-142. 2 consecutive TRAF-type zinc fingers follow at residues 150–202 (DHQA…EDKE) and 203–259 (IHDQ…NHLA). Positions 288–348 (YISEVRNFQE…DKVAEIEAQQ (61 aa)) form a coiled coil. A Glycyl lysine isopeptide (Lys-Gly) (interchain with G-Cter in ubiquitin) cross-link involves residue Lys-319. Positions 350–499 (NGIYIWKIGN…DDTLLVRCEV (150 aa)) constitute an MATH domain. An interaction with TANK region spans residues 355-522 (WKIGNFGMHL…FQPRSTDAGV (168 aa)). Lys-453 is covalently cross-linked (Glycyl lysine isopeptide (Lys-Gly) (interchain with G-Cter in SUMO)).

This sequence belongs to the TNF receptor-associated factor family. A subfamily. As to quaternary structure, homotrimer. Homooligomer. N-terminal region is dimeric while C-terminal region is trimeric; maybe providing a mode of oligomerization. Upon IL1B treatment, forms a complex with PELI1, IRAK1, IRAK4 and MYD88; this complex recruits MAP3K7/TAK1, TAB1 and TAB2 to mediate NF-kappa-B activation. Direct binding of SMAD6 to PELI1 prevents the complex formation and hence negatively regulates IL1R-TLR signaling and eventually NF-kappa-B-mediated gene expression. Binds to TNFRSF5/CD40 and TNFRSF11A/RANK. Associates with NGFR, TNFRSF17, IRAK2, IRAK3, RIPK2, MAP3K1, MAP3K5, MAP3K14, CSK, TRAF, TRAF-interacting protein TRIP and TNF receptor associated protein TDP2. Interacts with IL17R. Interacts with SQSTM1 bridging NTRK1 and NGFR. Forms a ternary complex with SQSTM1 and PRKCZ. Interacts with PELI2 and PELI3. Binds UBE2V1. Interacts with TAX1BP1; this interaction mediates deubiquitination of TRAF6 and inhibition of NF-kappa-B activation. Interacts with ZNF675. Interacts with ARRB1 and ARRB2. Interacts with MAP3K7 and TAB1/MAP3K7IP1; during IL-1 signaling. Interacts with UBE2N. Interacts with TGFBR1, HDAC1 and RANGAP1. Interacts with AKT1, AKT2 and AKT3. Interacts (via TRAF domains) with NUMBL (via C-terminal). Interacts with RBCK1. Interacts with LIMD1 (via LIM domains). Interacts with RSAD2/viperin. Interacts (via C-terminus) with EIF2AK2/PKR (via the kinase catalytic domain). Interacts with ZFAND5. Interacts with IL1RL1. Interacts with TRAFD1. Interacts with AJUBA. Interacts with MAVS/IPS1. Interacts (via TRAF domains) with DYNC2I2 (via WD domains). Interacts with IFIT3 (via N-terminus). Interacts with TICAM2. Interacts with CARD14. Interacts with CD40 and MAP3K8; the interaction is required for ERK activation. Interacts with TICAM1 and this interaction is enhanced in the presence of WDFY1. Interacts with TANK; this interaction increases in response to DNA damage. Interacts with USP10; this interaction increases in response to DNA damage. Interacts with ZC3H12A; this interaction increases in response to DNA damage and is stimulated by TANK. Interacts with WDFY3. Interacts with TRIM13. Interacts with GPS2. Interacts (via C-terminus) with SASH1. Interacts with LRRC19. Interacts with IL17RA and TRAF3IP2. Interacts with TOMM70. Interacts with AMBRA1; interaction is required to mediate 'Lys-63'-linked ubiquitination of ULK1. Interacts with CRBN; this interaction inhibits TLR4-mediated signaling by preventing TRAF6-mediated ubiquitination of ECSIT. In terms of processing, sumoylated on Lys-124, Lys-142 and Lys-453 with SUMO1. Polyubiquitinated on Lys-124 by TRAF3IP2; after cell stimulation with IL17A. Polyubiquitinated on Lys-124; after cell stimulation with IL1B or TGFB. This ligand-induced cell stimulation leads to dimerization/oligomerization of TRAF6 molecules, followed by auto-ubiquitination which involves UBE2N and UBE2V1 and leads to TRAF6 activation. This 'Lys-63' site-specific poly-ubiquitination appears to be associated with the activation of signaling molecules. Endogenous autoubiquitination occurs only for the cytoplasmic form. Deubiquitinated by USP10 in a TANK-dependent manner, leading to the negative regulation of NF-kappaB signaling upon DNA damage. LRRC19 induces 'Lys-63' ubiquitination. Ubiquitinated at Lys-319 by the SCF(FBXL2) complex, leading to its degradation by the proteasome. Post-translationally, (Microbial infection) Deubiquitinated by Epstein-Barr virus BPLF1 on both 'Lys-48' and 'Lys-63'-linked ubiquitin chains; leading to NF-kappa-B signaling inhibition. Expressed in heart, brain, placenta, lung, liver, skeletal muscle, kidney and pancreas.

It is found in the cytoplasm. It localises to the cell cortex. Its subcellular location is the nucleus. The protein localises to the lipid droplet. It carries out the reaction S-ubiquitinyl-[E2 ubiquitin-conjugating enzyme]-L-cysteine + [acceptor protein]-L-lysine = [E2 ubiquitin-conjugating enzyme]-L-cysteine + N(6)-ubiquitinyl-[acceptor protein]-L-lysine.. It participates in protein modification; protein ubiquitination. In terms of biological role, E3 ubiquitin ligase that, together with UBE2N and UBE2V1, mediates the synthesis of 'Lys-63'-linked-polyubiquitin chains conjugated to proteins, such as ECSIT, IKBKG, IRAK1, AKT1 and AKT2. Also mediates ubiquitination of free/unanchored polyubiquitin chain that leads to MAP3K7 activation. Leads to the activation of NF-kappa-B and JUN. Seems to also play a role in dendritic cells (DCs) maturation and/or activation. Represses c-Myb-mediated transactivation, in B-lymphocytes. Adapter protein that seems to play a role in signal transduction initiated via TNF receptor, IL-1 receptor and IL-17 receptor. Regulates osteoclast differentiation by mediating the activation of adapter protein complex 1 (AP-1) and NF-kappa-B, in response to RANK-L stimulation. Together with MAP3K8, mediates CD40 signals that activate ERK in B-cells and macrophages, and thus may play a role in the regulation of immunoglobulin production. Acts as a regulator of the JNK and NF-kappa-B signaling pathways by initiating assembly of heterotypic 'Lys-63'-/'Lys-48'-linked branched ubiquitin chains that are then recognized by TAB2: TRAF6 catalyzes initial 'Lys-63'-linked-polyubiquitin chains that are then branched via 'Lys-48'-linked polyubiquitin by HUWE1. 'Lys-63'-/'Lys-48'-linked branched ubiquitin chains protect 'Lys-63'-linkages from CYLD deubiquitination. Participates also in the TCR signaling by ubiquitinating LAT. In Homo sapiens (Human), this protein is TNF receptor-associated factor 6 (TRAF6).